We begin with the raw amino-acid sequence, 153 residues long: Transcriptional repressor NrdR (153 aa).

A zinc finger lies at 3-34; sequence CPYCGYEDSKVIDTRPADEGRTIKRRRECLKC. The ATP-cone domain maps to 49 to 139; that stretch reads ILVIKKDNRR…VYRQFKDINT (91 aa).

Belongs to the NrdR family. The cofactor is Zn(2+).

Negatively regulates transcription of bacterial ribonucleotide reductase nrd genes and operons by binding to NrdR-boxes. The protein is Transcriptional repressor NrdR of Caldicellulosiruptor saccharolyticus (strain ATCC 43494 / DSM 8903 / Tp8T 6331).